A 566-amino-acid chain; its full sequence is Proline--tRNA ligase (566 aa).

Belongs to the class-II aminoacyl-tRNA synthetase family. ProS type 1 subfamily. As to quaternary structure, homodimer.

It localises to the cytoplasm. The enzyme catalyses tRNA(Pro) + L-proline + ATP = L-prolyl-tRNA(Pro) + AMP + diphosphate. Catalyzes the attachment of proline to tRNA(Pro) in a two-step reaction: proline is first activated by ATP to form Pro-AMP and then transferred to the acceptor end of tRNA(Pro). As ProRS can inadvertently accommodate and process non-cognate amino acids such as alanine and cysteine, to avoid such errors it has two additional distinct editing activities against alanine. One activity is designated as 'pretransfer' editing and involves the tRNA(Pro)-independent hydrolysis of activated Ala-AMP. The other activity is designated 'posttransfer' editing and involves deacylation of mischarged Ala-tRNA(Pro). The misacylated Cys-tRNA(Pro) is not edited by ProRS. This chain is Proline--tRNA ligase, found in Exiguobacterium sibiricum (strain DSM 17290 / CCUG 55495 / CIP 109462 / JCM 13490 / 255-15).